Consider the following 255-residue polypeptide: Defective in cullin neddylation protein 1 (255 aa).

The UBA-like domain maps to 6-43 (QRELIREFLAVTSATSAAAETYLERNHWSLDHALDDFY). Positions 54-250 (QYSAELVATF…VIDEYYEWVK (197 aa)) constitute a DCUN1 domain.

Its function is as follows. May contribute to neddylation of cullin components of SCF-type E3 ubiquitin ligase complexes. Neddylation of cullins play an essential role in the regulation of SCF-type complexes activity. In Eremothecium gossypii (strain ATCC 10895 / CBS 109.51 / FGSC 9923 / NRRL Y-1056) (Yeast), this protein is Defective in cullin neddylation protein 1 (DCN1).